The following is a 637-amino-acid chain: 1-deoxy-D-xylulose-5-phosphate synthase (637 aa).

Thiamine diphosphate contacts are provided by residues His75 and 116–118; that span reads AHS. Asp147 is a binding site for Mg(2+). Thiamine diphosphate contacts are provided by residues 148-149, Asn177, Tyr288, and Glu370; that span reads GA. Asn177 serves as a coordination point for Mg(2+).

It belongs to the transketolase family. DXPS subfamily. In terms of assembly, homodimer. Mg(2+) is required as a cofactor. The cofactor is thiamine diphosphate.

The catalysed reaction is D-glyceraldehyde 3-phosphate + pyruvate + H(+) = 1-deoxy-D-xylulose 5-phosphate + CO2. It participates in metabolic intermediate biosynthesis; 1-deoxy-D-xylulose 5-phosphate biosynthesis; 1-deoxy-D-xylulose 5-phosphate from D-glyceraldehyde 3-phosphate and pyruvate: step 1/1. Functionally, catalyzes the acyloin condensation reaction between C atoms 2 and 3 of pyruvate and glyceraldehyde 3-phosphate to yield 1-deoxy-D-xylulose-5-phosphate (DXP). This is 1-deoxy-D-xylulose-5-phosphate synthase from Cupriavidus metallidurans (strain ATCC 43123 / DSM 2839 / NBRC 102507 / CH34) (Ralstonia metallidurans).